Reading from the N-terminus, the 213-residue chain is CDP-diacylglycerol--inositol 3-phosphatidyltransferase (213 aa).

Residues Met1–Asn5 are Cytoplasmic-facing. Residues Ile6–Phe26 form a helical membrane-spanning segment. Tyr27 is a topological domain (lumenal). The helical transmembrane segment at Phe28 to Ala48 threads the bilayer. Mg(2+) contacts are provided by Asp47 and Asp50. Over Phe49–Arg73 the chain is Cytoplasmic. Positions 51, 55, and 61 each coordinate a CDP-1,2-diacyl-sn-glycerol. Positions 68 and 72 each coordinate Mg(2+). Asp72 serves as the catalytic Proton acceptor. Residues Cys74–Phe94 traverse the membrane as a helical segment. Residue Gln95 is a topological domain, lumenal. Residues Leu96–Gly116 form a helical membrane-spanning segment. Residues Ser117–Pro139 lie on the Cytoplasmic side of the membrane. A helical membrane pass occupies residues Ala140–Phe160. Topologically, residues Ser161–Met174 are lumenal. Residues Gly175 to Val195 traverse the membrane as a helical segment. The Cytoplasmic portion of the chain corresponds to Thr196–Lys213.

This sequence belongs to the CDP-alcohol phosphatidyltransferase class-I family. The cofactor is Mn(2+). Requires Mg(2+) as cofactor. Detected in liver (at protein level). Widely expressed. Highly expressed in the brain and kidney; lower levels in heart, spleen, lung, liver, skeletal muscle and testis.

It is found in the endoplasmic reticulum membrane. The protein localises to the cell membrane. The enzyme catalyses a CDP-1,2-diacyl-sn-glycerol + myo-inositol = a 1,2-diacyl-sn-glycero-3-phospho-(1D-myo-inositol) + CMP + H(+). In terms of biological role, catalyzes the biosynthesis of phosphatidylinositol (PtdIns) as well as PtdIns:inositol exchange reaction. May thus act to reduce an excessive cellular PtdIns content. The exchange activity is due to the reverse reaction of PtdIns synthase and is dependent on CMP, which is tightly bound to the enzyme. The protein is CDP-diacylglycerol--inositol 3-phosphatidyltransferase of Rattus norvegicus (Rat).